Consider the following 428-residue polypeptide: Histidinol dehydrogenase (428 aa).

Y125, Q186, and N209 together coordinate NAD(+). Substrate is bound by residues S232, Q254, and H257. Residues Q254 and H257 each contribute to the Zn(2+) site. Catalysis depends on proton acceptor residues E322 and H323. Substrate contacts are provided by H323, D356, E410, and H415. Position 356 (D356) interacts with Zn(2+). Residue H415 coordinates Zn(2+).

This sequence belongs to the histidinol dehydrogenase family. Zn(2+) serves as cofactor.

The catalysed reaction is L-histidinol + 2 NAD(+) + H2O = L-histidine + 2 NADH + 3 H(+). Its pathway is amino-acid biosynthesis; L-histidine biosynthesis; L-histidine from 5-phospho-alpha-D-ribose 1-diphosphate: step 9/9. Catalyzes the sequential NAD-dependent oxidations of L-histidinol to L-histidinaldehyde and then to L-histidine. The chain is Histidinol dehydrogenase from Lactiplantibacillus plantarum (strain ATCC BAA-793 / NCIMB 8826 / WCFS1) (Lactobacillus plantarum).